Consider the following 326-residue polypeptide: Transcription factor MYB16 (326 aa).

HTH myb-type domains follow at residues 9-61 (KLGL…TNYL) and 62-116 (RPDI…KKRL). DNA-binding regions (H-T-H motif) lie at residues 37–61 (WRSLPEKAGLHRCGKSCRLRWTNYL) and 89–112 (WSAIATHLPKRTDNEIKNYWNTHL). Disordered regions lie at residues 197–217 (NWTTKPHEDQQQLESPTSTVS) and 280–299 (DRSFSGDKNETAGESSGGDC). The span at 208–217 (QLESPTSTVS) shows a compositional bias: polar residues. Residues 280–290 (DRSFSGDKNET) show a composition bias toward basic and acidic residues.

Expressed in trichomes, epidermis and mesophyll cells of young leaves, stems, petals, sepals, carpels and stamens.

Its subcellular location is the nucleus. Its function is as follows. Involved in the control of epidermal cell morphogenesis in petals. Promotes unidirectional cell expansion once outgrowth has been initiated. Coordinately with WIN1/SHN1, participates in the regulation of cuticle biosynthesis and wax accumulation in reproductive organs and trichomes. Functions in cuticle nanoridge formation in petals and stamens, and in morphogenesis of petal conical cells and trichomes. Functions as a major regulator of cuticle formation in vegetative organs by regulating the cuticle biosynthesis genes CYP86A8/LCR and CER1. This Arabidopsis thaliana (Mouse-ear cress) protein is Transcription factor MYB16.